The primary structure comprises 519 residues: GATA zinc finger domain-containing protein 8 (519 aa).

4 disordered regions span residues Y25–G182, S198–T249, S273–Q359, and D431–E453. A compositionally biased stretch (low complexity) spans T37–N156. The span at S172–G182 shows a compositional bias: polar residues. Positions S273–N357 are enriched in low complexity. The stretch at K429–V461 forms a coiled coil. A GATA-type zinc finger spans residues C462–C487.

The protein is GATA zinc finger domain-containing protein 8 (gtaH) of Dictyostelium discoideum (Social amoeba).